A 508-amino-acid polypeptide reads, in one-letter code: Adenosine deaminase (508 aa).

Positions 1-18 (MFSQLVVWLLATSTVCLA) are cleaved as a signal peptide.

It belongs to the metallo-dependent hydrolases superfamily. Adenosine and AMP deaminases family. ADGF subfamily. Requires Zn(2+) as cofactor. Salivary gland (at protein level).

The protein localises to the secreted. The enzyme catalyses adenosine + H2O + H(+) = inosine + NH4(+). Its function is as follows. Catalyzes the deamination of adenosine to inosine. The sequence is that of Adenosine deaminase from Lutzomyia longipalpis (Sand fly).